The primary structure comprises 545 residues: Indole-3-pyruvate decarboxylase (545 aa).

E48 is a binding site for thiamine diphosphate. Positions 382–460 are thiamine pyrophosphate binding; the sequence is DCLFTAMDMI…VILFNNASWE (79 aa). D429 and N456 together coordinate Mg(2+).

It belongs to the TPP enzyme family. A metal cation is required as a cofactor. Requires thiamine diphosphate as cofactor.

The catalysed reaction is indole-3-pyruvate + H(+) = indole-3-acetaldehyde + CO2. It participates in plant hormone metabolism; auxin biosynthesis. In Azospirillum brasilense, this protein is Indole-3-pyruvate decarboxylase (ipdC).